A 305-amino-acid polypeptide reads, in one-letter code: Ornithine carbamoyltransferase, anabolic (305 aa).

Carbamoyl phosphate contacts are provided by residues 53 to 56, glutamine 80, arginine 104, and 131 to 134; these read STRT and HPCQ. L-ornithine-binding positions include asparagine 162, aspartate 219, and 223-224; that span reads SM. Carbamoyl phosphate is bound by residues 259 to 260 and arginine 287; that span reads CL.

This sequence belongs to the aspartate/ornithine carbamoyltransferase superfamily. OTCase family. Homotrimer.

Its subcellular location is the cytoplasm. The catalysed reaction is carbamoyl phosphate + L-ornithine = L-citrulline + phosphate + H(+). Its pathway is amino-acid biosynthesis; L-arginine biosynthesis; L-arginine from L-ornithine and carbamoyl phosphate: step 1/3. In terms of biological role, reversibly catalyzes the transfer of the carbamoyl group from carbamoyl phosphate (CP) to the N(epsilon) atom of ornithine (ORN) to produce L-citrulline, which is a substrate for argininosuccinate synthetase (ArgG) involved in the final step in arginine biosynthesis. The polypeptide is Ornithine carbamoyltransferase, anabolic (Pseudomonas aeruginosa (strain ATCC 15692 / DSM 22644 / CIP 104116 / JCM 14847 / LMG 12228 / 1C / PRS 101 / PAO1)).